We begin with the raw amino-acid sequence, 926 residues long: Beta-mannosidase A (926 aa).

The first 21 residues, 1-21 (MHVKAETVLALLTPAPPSVVG), serve as a signal peptide directing secretion. Asn40, Asn242, Asn277, Asn311, and Asn342 each carry an N-linked (GlcNAc...) asparagine glycan. Glu474 serves as the catalytic Proton donor. N-linked (GlcNAc...) asparagine glycans are attached at residues Asn532, Asn603, Asn626, Asn653, Asn733, Asn756, Asn785, Asn793, Asn819, and Asn905.

This sequence belongs to the glycosyl hydrolase 2 family. Beta-mannosidase A subfamily. In terms of assembly, homodimer.

It localises to the secreted. The enzyme catalyses Hydrolysis of terminal, non-reducing beta-D-mannose residues in beta-D-mannosides.. It participates in glycan metabolism; N-glycan degradation. Its function is as follows. Exoglycosidase that cleaves the single beta-linked mannose residue from the non-reducing end of beta-mannosidic oligosaccharides of various complexity and length. Involved in the degradation of polymeric mannan and galactomannan. The polypeptide is Beta-mannosidase A (mndA) (Aspergillus fumigatus (strain CBS 144.89 / FGSC A1163 / CEA10) (Neosartorya fumigata)).